Reading from the N-terminus, the 600-residue chain is Aspartate--tRNA(Asp/Asn) ligase (600 aa).

Glutamate 174 provides a ligand contact to L-aspartate. Residues 198-201 (QLFK) form an aspartate region. Residue arginine 220 coordinates L-aspartate. Residues 220–222 (RDE) and glutamine 229 contribute to the ATP site. Histidine 457 is an L-aspartate binding site. Glutamate 491 lines the ATP pocket. Residue arginine 498 coordinates L-aspartate. Position 543–546 (543–546 (GLDR)) interacts with ATP.

Belongs to the class-II aminoacyl-tRNA synthetase family. Type 1 subfamily. Homodimer.

It localises to the cytoplasm. The enzyme catalyses tRNA(Asx) + L-aspartate + ATP = L-aspartyl-tRNA(Asx) + AMP + diphosphate. Functionally, aspartyl-tRNA synthetase with relaxed tRNA specificity since it is able to aspartylate not only its cognate tRNA(Asp) but also tRNA(Asn). Reaction proceeds in two steps: L-aspartate is first activated by ATP to form Asp-AMP and then transferred to the acceptor end of tRNA(Asp/Asn). The protein is Aspartate--tRNA(Asp/Asn) ligase of Burkholderia lata (strain ATCC 17760 / DSM 23089 / LMG 22485 / NCIMB 9086 / R18194 / 383).